The sequence spans 434 residues: Beta-phenylalanine transaminase (434 aa).

(S)-3-amino-3-phenylpropanoate is bound at residue arginine 41. 132-133 (GT) is a pyridoxal 5'-phosphate binding site. N6-(pyridoxal phosphate)lysine is present on lysine 267. A pyridoxal 5'-phosphate-binding site is contributed by threonine 300.

The protein belongs to the class-III pyridoxal-phosphate-dependent aminotransferase family. As to quaternary structure, homodimer. It depends on pyridoxal 5'-phosphate as a cofactor.

The enzyme catalyses (S)-3-amino-3-phenylpropanoate + 2-oxoglutarate = 3-oxo-3-phenylpropanoate + L-glutamate. The catalysed reaction is (S)-3-amino-3-phenylpropanoate + pyruvate = 3-oxo-3-phenylpropanoate + L-alanine. Is inhibited by 2-aminooxyacetate (AOA), a mimic of beta-alanine and a known inhibitor of aminotransferases. Functionally, aminotransferase that acts exclusively on beta-amino acids and exhibits a broad substrate range in vitro, accepting meta-, para- and, to a lesser extent, ortho-substituted beta-phenylalanine derivatives as amino donors, and 2-oxoglutarate or pyruvate as amino acceptors. Is highly enantioselective toward (S)-beta-phenylalanine (is not active with (R)-beta-phenylalanine) and derivatives with different substituents on the phenyl ring, allowing the kinetic resolution of various racemic beta-amino acids to yield (R)-beta-amino acids with &gt;95% enantiomeric excess (ee). Highly prefers aromatic beta-amino acids over aliphatic beta-amino acids; cannot use beta-alanine or beta-glutamate as substrate. Is likely involved in the beta-phenylalanine degradation pathway that allows V.paradoxus strain CBF3 to use beta-phenylalanine as a sole nitrogen source. In Variovorax paradoxus, this protein is Beta-phenylalanine transaminase.